We begin with the raw amino-acid sequence, 254 residues long: 5-oxoprolinase subunit A (254 aa).

Belongs to the LamB/PxpA family. In terms of assembly, forms a complex composed of PxpA, PxpB and PxpC.

It catalyses the reaction 5-oxo-L-proline + ATP + 2 H2O = L-glutamate + ADP + phosphate + H(+). Catalyzes the cleavage of 5-oxoproline to form L-glutamate coupled to the hydrolysis of ATP to ADP and inorganic phosphate. The protein is 5-oxoprolinase subunit A of Acinetobacter baylyi (strain ATCC 33305 / BD413 / ADP1).